The following is a 129-amino-acid chain: Small ribosomal subunit protein uS12 (129 aa).

Disordered stretches follow at residues 1-25 (MPTYNQLVRFGRKSKTRKTKSPALE) and 110-129 (RKQGRSRYGAPRKQVAVTKK). Basic residues predominate over residues 10–20 (FGRKSKTRKTK).

The protein belongs to the universal ribosomal protein uS12 family. In terms of assembly, part of the 30S ribosomal subunit. Contacts proteins S8 and S17. May interact with IF1 in the 30S initiation complex.

In terms of biological role, with S4 and S5 plays an important role in translational accuracy. Its function is as follows. Interacts with and stabilizes bases of the 16S rRNA that are involved in tRNA selection in the A site and with the mRNA backbone. Located at the interface of the 30S and 50S subunits, it traverses the body of the 30S subunit contacting proteins on the other side and probably holding the rRNA structure together. The combined cluster of proteins S8, S12 and S17 appears to hold together the shoulder and platform of the 30S subunit. The protein is Small ribosomal subunit protein uS12 of Rickettsia conorii (strain ATCC VR-613 / Malish 7).